The sequence spans 387 residues: Succinate--CoA ligase [ADP-forming] subunit beta (387 aa).

ATP is bound by residues lysine 46, 53–55, glutamate 99, cysteine 102, and glutamate 107; that span reads GRG. 2 residues coordinate Mg(2+): asparagine 196 and aspartate 210. Substrate is bound by residues asparagine 261 and 318 to 320; that span reads GIV.

The protein belongs to the succinate/malate CoA ligase beta subunit family. In terms of assembly, heterotetramer of two alpha and two beta subunits. Mg(2+) is required as a cofactor.

The catalysed reaction is succinate + ATP + CoA = succinyl-CoA + ADP + phosphate. It catalyses the reaction GTP + succinate + CoA = succinyl-CoA + GDP + phosphate. It participates in carbohydrate metabolism; tricarboxylic acid cycle; succinate from succinyl-CoA (ligase route): step 1/1. Succinyl-CoA synthetase functions in the citric acid cycle (TCA), coupling the hydrolysis of succinyl-CoA to the synthesis of either ATP or GTP and thus represents the only step of substrate-level phosphorylation in the TCA. The beta subunit provides nucleotide specificity of the enzyme and binds the substrate succinate, while the binding sites for coenzyme A and phosphate are found in the alpha subunit. The protein is Succinate--CoA ligase [ADP-forming] subunit beta of Campylobacter hominis (strain ATCC BAA-381 / DSM 21671 / CCUG 45161 / LMG 19568 / NCTC 13146 / CH001A).